The following is a 277-amino-acid chain: 3-methyl-2-oxobutanoate hydroxymethyltransferase (277 aa).

2 residues coordinate Mg(2+): aspartate 53 and aspartate 96. Residues 53–54 (DS), aspartate 96, and lysine 126 each bind 3-methyl-2-oxobutanoate. Glutamate 128 contributes to the Mg(2+) binding site. Glutamate 195 acts as the Proton acceptor in catalysis.

Belongs to the PanB family. In terms of assembly, homodecamer; pentamer of dimers. Mg(2+) serves as cofactor.

The protein localises to the cytoplasm. The enzyme catalyses 3-methyl-2-oxobutanoate + (6R)-5,10-methylene-5,6,7,8-tetrahydrofolate + H2O = 2-dehydropantoate + (6S)-5,6,7,8-tetrahydrofolate. It participates in cofactor biosynthesis; (R)-pantothenate biosynthesis; (R)-pantoate from 3-methyl-2-oxobutanoate: step 1/2. Functionally, catalyzes the reversible reaction in which hydroxymethyl group from 5,10-methylenetetrahydrofolate is transferred onto alpha-ketoisovalerate to form ketopantoate. This Pelodictyon phaeoclathratiforme (strain DSM 5477 / BU-1) protein is 3-methyl-2-oxobutanoate hydroxymethyltransferase.